We begin with the raw amino-acid sequence, 981 residues long: MEKLDKIRMSQKLSCWQHILTTLGTSSKTEQEWNTFFKGFLESWRKPYCIQTSCDPSIPLRKELLVRPRKALQENPHGPGSTLPESPVFLEPINSTAPREHPSPSKSHSTGSTGCDPGNGERSPSVSNKNSKYKNPGNSKYAKIWKRSNNHTTSIFSKAQISKRRDKLSSTKKRPDTCAPTDDSRKNREPRACAPNKNIFKTRETNAPNLTKNSCALPNVLILSPNSASKITQRGHSVGQTQDYKASPGKIIKRVPRYSLQCLKKKTEKVHNKIMDKPKNKQQPQTPPPFLLNNEYTESSDDSDDQLPLSELSQKMKSNKLNTLFLSRNEDCSPAPEKVKLKGERPAQNKKEQLTWEPSILTNLTDLGKQVAEPLRKSVKKSAKQQKPRVRAPPQGKKTLPQLQTGLKTQDKQSTHEMISEQAKTISEASGQQTSQVQSSLSPNNIRNNSVKLISAKTLMPAQRSQDYSPNKMQVGQPLGFAIELPSPVDGKEASVEIDTQLVHTSKFLENMTRPSTVEVHKFDLMDIFMGENEKLDYEYDDDDVLSVAASWNGLDDENVPEDEPRKEAKTAEQLPKPEPSTETLKPIEKENAQKMQSIKSFQIPKLNAKNLKTQPSVMRSIYENEELEKNKVLAKPAPPSLVHQPLAESNRNQRDEATAARRAKETFPVFAPLYRVAPESAATLVSANSQQVIPQVYFSTSNQDGVNWIKDVFGIRCMQSVDNKCISINCDHTMNSLGEVQKRLMRMDEDTLLSLYRQTIRSFFLFQTYYTSFVDIFKFRNLWQYLLIMLVDCRLYKSISAPLLAHVYEALSKCGMQKEAVKRIMEHVWLPCKAHKYRDLMLTTLNILSNANWEDYCDKLTQLDKDYNFEIPHKNLITILKSSVDCSDKFANALKLITLHPNSIRTNETIMSILSNASKSYSYMHNESASASQGPPGAASFLAPPAAIQPPHTTVPNFGYLPNPSFHYSNEYAINIHNFD.

The segment at 1 to 60 is required for interaction with rhi/rhino; sequence MEKLDKIRMSQKLSCWQHILTTLGTSSKTEQEWNTFFKGFLESWRKPYCIQTSCDPSIPL. Disordered regions lie at residues 72–195, 274–307, 327–352, 375–446, 554–586, and 642–662; these read LQEN…ACAP, IMDK…DDQL, SRNE…NKKE, LRKS…PNNI, GLDD…ETLK, and LVHQ…TAAR. Composition is skewed to polar residues over residues 104-113 and 150-160; these read PSKSHSTGST and NHTTSIFSKAQ. Over residues 167–191 the composition is skewed to basic and acidic residues; sequence KLSSTKKRPDTCAPTDDSRKNREPR. Positions 337–352 are enriched in basic and acidic residues; it reads EKVKLKGERPAQNKKE. Basic residues predominate over residues 377-390; sequence KSVKKSAKQQKPRV. Positions 409–419 are enriched in basic and acidic residues; it reads TQDKQSTHEMI. Positions 422 to 446 are enriched in polar residues; that stretch reads QAKTISEASGQQTSQVQSSLSPNNI. Over residues 652 to 662 the composition is skewed to basic and acidic residues; that stretch reads RNQRDEATAAR.

In terms of assembly, component of the Rhino-Deadlock-Cutoff (RDC) complex, composed of rhi/rhino, del/deadlock and cuff/cutoff. Interacts (via N-terminus) with rhi/rhino (via C-terminus); this interaction is direct. Interacts (via C-terminus) with cuff/cutoff; this interaction is direct.

The protein localises to the nucleus. Its subcellular location is the cytoplasm. The protein resides in the cytoskeleton. It localises to the microtubule organizing center. It is found in the centrosome. The protein localises to the chromosome. Functionally, developmental protein involved in oogenesis. Required for germline maintenance, stability of mitotic spindles, localization of patterning determinants, oocyte growth and fusome biogenesis in males and females. Also required for dorso-ventral and antero-posterior patterning of oocyte and eggshell. May be involved in microtubule function during oogenesis. Part of a rhi-dependent transcription machinery that enables the generation of piRNA precursors from heterochromatin while maintaining the suppression of transposon-encoded promoters and enhancers. Component of the RDC complex (rhi, del and cuff) which binds to repressive H3K9me3 marks in the piRNA clusters. RDC promotes the bidirectional transcription of piRNA clusters at these sites by interacting with Moonshiner which forms a complex with the transcription initiation factors TfIIA-S and Trf2. This mechanism allows transcription to occur in piRNA clusters despite the lack of proper promoter elements and in the presence of the repressive H3K9me3 mark. As part of the RDC complex, involved in suppression of splicing. This chain is Protein deadlock (del), found in Drosophila melanogaster (Fruit fly).